The sequence spans 358 residues: Uroporphyrinogen decarboxylase (358 aa).

Substrate is bound by residues 29–33 (RQAGR), D79, Y156, T211, and H329.

It belongs to the uroporphyrinogen decarboxylase family. As to quaternary structure, homodimer.

The protein resides in the cytoplasm. The catalysed reaction is uroporphyrinogen III + 4 H(+) = coproporphyrinogen III + 4 CO2. It participates in porphyrin-containing compound metabolism; protoporphyrin-IX biosynthesis; coproporphyrinogen-III from 5-aminolevulinate: step 4/4. Catalyzes the decarboxylation of four acetate groups of uroporphyrinogen-III to yield coproporphyrinogen-III. The polypeptide is Uroporphyrinogen decarboxylase (Idiomarina loihiensis (strain ATCC BAA-735 / DSM 15497 / L2-TR)).